A 376-amino-acid polypeptide reads, in one-letter code: Glucose-1-phosphate adenylyltransferase (376 aa).

Alpha-D-glucose 1-phosphate contacts are provided by residues Tyr101, Gly166, 181–182, and Ser192; that span reads EK.

It belongs to the bacterial/plant glucose-1-phosphate adenylyltransferase family. Homotetramer.

It catalyses the reaction alpha-D-glucose 1-phosphate + ATP + H(+) = ADP-alpha-D-glucose + diphosphate. The protein operates within glycan biosynthesis; glycogen biosynthesis. In terms of biological role, involved in the biosynthesis of ADP-glucose, a building block required for the elongation reactions to produce glycogen. Catalyzes the reaction between ATP and alpha-D-glucose 1-phosphate (G1P) to produce pyrophosphate and ADP-Glc. This is Glucose-1-phosphate adenylyltransferase from Bacillus cereus (strain ZK / E33L).